Consider the following 416-residue polypeptide: RNA polymerase sigma factor SigA (416 aa).

The sigma-70 factor domain-2 stretch occupies residues 184-254 (MVQSNLRLVV…TRAIADQSRT (71 aa)). The Interaction with polymerase core subunit RpoC signature appears at 208–211 (DLIQ). Positions 263-338 (ETISRIKKTT…EADGETPEDE (76 aa)) are sigma-70 factor domain-3. The interval 351–404 (VLDTLSPRERDVLRLRYGLDDGRMKTLEEIGQIFNVTRERIRQIEAKALRKLRH) is sigma-70 factor domain-4. The H-T-H motif DNA-binding region spans 377 to 396 (LEEIGQIFNVTRERIRQIEA).

This sequence belongs to the sigma-70 factor family. RpoD/SigA subfamily. As to quaternary structure, interacts transiently with the RNA polymerase catalytic core.

Its subcellular location is the cytoplasm. In terms of biological role, sigma factors are initiation factors that promote the attachment of RNA polymerase to specific initiation sites and are then released. This sigma factor is the primary sigma factor during exponential growth. The protein is RNA polymerase sigma factor SigA of Microcystis aeruginosa.